Consider the following 292-residue polypeptide: UDP-N-acetylenolpyruvoylglucosamine reductase (292 aa).

The 166-residue stretch at 21–186 (QAGGLVDYLA…ISATFELQPD (166 aa)) folds into the FAD-binding PCMH-type domain. Arg165 is an active-site residue. Ser215 serves as the catalytic Proton donor. Glu285 is a catalytic residue.

The protein belongs to the MurB family. It depends on FAD as a cofactor.

The protein resides in the cytoplasm. The enzyme catalyses UDP-N-acetyl-alpha-D-muramate + NADP(+) = UDP-N-acetyl-3-O-(1-carboxyvinyl)-alpha-D-glucosamine + NADPH + H(+). It functions in the pathway cell wall biogenesis; peptidoglycan biosynthesis. Cell wall formation. This chain is UDP-N-acetylenolpyruvoylglucosamine reductase, found in Leuconostoc mesenteroides subsp. mesenteroides (strain ATCC 8293 / DSM 20343 / BCRC 11652 / CCM 1803 / JCM 6124 / NCDO 523 / NBRC 100496 / NCIMB 8023 / NCTC 12954 / NRRL B-1118 / 37Y).